The following is a 190-amino-acid chain: Segregation and condensation protein B (190 aa).

It belongs to the ScpB family. Homodimer. Homodimerization may be required to stabilize the binding of ScpA to the Smc head domains. Component of a cohesin-like complex composed of ScpA, ScpB and the Smc homodimer, in which ScpA and ScpB bind to the head domain of Smc. The presence of the three proteins is required for the association of the complex with DNA.

It is found in the cytoplasm. In terms of biological role, participates in chromosomal partition during cell division. May act via the formation of a condensin-like complex containing Smc and ScpA that pull DNA away from mid-cell into both cell halves. The polypeptide is Segregation and condensation protein B (Bacillus thuringiensis subsp. konkukian (strain 97-27)).